The chain runs to 157 residues: Transcription elongation factor GreA (157 aa).

The protein belongs to the GreA/GreB family.

Its function is as follows. Necessary for efficient RNA polymerase transcription elongation past template-encoded arresting sites. The arresting sites in DNA have the property of trapping a certain fraction of elongating RNA polymerases that pass through, resulting in locked ternary complexes. Cleavage of the nascent transcript by cleavage factors such as GreA or GreB allows the resumption of elongation from the new 3'terminus. GreA releases sequences of 2 to 3 nucleotides. The sequence is that of Transcription elongation factor GreA from Mesorhizobium japonicum (strain LMG 29417 / CECT 9101 / MAFF 303099) (Mesorhizobium loti (strain MAFF 303099)).